The primary structure comprises 412 residues: Peptidase T (412 aa).

Position 78 (histidine 78) interacts with Zn(2+). Residue aspartate 80 is part of the active site. Aspartate 140 contributes to the Zn(2+) binding site. Glutamate 173 serves as the catalytic Proton acceptor. Residues glutamate 174, aspartate 196, and histidine 379 each contribute to the Zn(2+) site.

The protein belongs to the peptidase M20B family. Zn(2+) serves as cofactor.

The protein localises to the cytoplasm. The catalysed reaction is Release of the N-terminal residue from a tripeptide.. In terms of biological role, cleaves the N-terminal amino acid of tripeptides. The chain is Peptidase T from Edwardsiella ictaluri (strain 93-146).